The chain runs to 124 residues: uncharacterized protein (124 aa).

Belongs to the asfivirus H124R family.

The protein localises to the virion. This is an uncharacterized protein from Ornithodoros (relapsing fever ticks).